Reading from the N-terminus, the 688-residue chain is Glycine--tRNA ligase beta subunit (688 aa).

It belongs to the class-II aminoacyl-tRNA synthetase family. Tetramer of two alpha and two beta subunits.

The protein resides in the cytoplasm. The enzyme catalyses tRNA(Gly) + glycine + ATP = glycyl-tRNA(Gly) + AMP + diphosphate. The polypeptide is Glycine--tRNA ligase beta subunit (Histophilus somni (strain 129Pt) (Haemophilus somnus)).